The sequence spans 199 residues: Thymidylate kinase (199 aa).

7–14 serves as a coordination point for ATP; that stretch reads GTEGVGKT.

Belongs to the thymidylate kinase family.

It catalyses the reaction dTMP + ATP = dTDP + ADP. Phosphorylation of dTMP to form dTDP in both de novo and salvage pathways of dTTP synthesis. This is Thymidylate kinase from Acinetobacter baumannii (strain ATCC 17978 / DSM 105126 / CIP 53.77 / LMG 1025 / NCDC KC755 / 5377).